We begin with the raw amino-acid sequence, 124 residues long: Small ribosomal subunit protein uS12 (124 aa).

The residue at position 89 (Asp89) is a 3-methylthioaspartic acid.

Belongs to the universal ribosomal protein uS12 family. Part of the 30S ribosomal subunit. Contacts proteins S8 and S17. May interact with IF1 in the 30S initiation complex.

Functionally, with S4 and S5 plays an important role in translational accuracy. In terms of biological role, interacts with and stabilizes bases of the 16S rRNA that are involved in tRNA selection in the A site and with the mRNA backbone. Located at the interface of the 30S and 50S subunits, it traverses the body of the 30S subunit contacting proteins on the other side and probably holding the rRNA structure together. The combined cluster of proteins S8, S12 and S17 appears to hold together the shoulder and platform of the 30S subunit. In Sodalis glossinidius (strain morsitans), this protein is Small ribosomal subunit protein uS12.